Here is a 145-residue protein sequence, read N- to C-terminus: D-aminoacyl-tRNA deacylase (145 aa).

Positions 137 to 138 match the Gly-cisPro motif, important for rejection of L-amino acids motif; the sequence is GP.

This sequence belongs to the DTD family. As to quaternary structure, homodimer.

Its subcellular location is the cytoplasm. It catalyses the reaction glycyl-tRNA(Ala) + H2O = tRNA(Ala) + glycine + H(+). The catalysed reaction is a D-aminoacyl-tRNA + H2O = a tRNA + a D-alpha-amino acid + H(+). In terms of biological role, an aminoacyl-tRNA editing enzyme that deacylates mischarged D-aminoacyl-tRNAs. Also deacylates mischarged glycyl-tRNA(Ala), protecting cells against glycine mischarging by AlaRS. Acts via tRNA-based rather than protein-based catalysis; rejects L-amino acids rather than detecting D-amino acids in the active site. By recycling D-aminoacyl-tRNA to D-amino acids and free tRNA molecules, this enzyme counteracts the toxicity associated with the formation of D-aminoacyl-tRNA entities in vivo and helps enforce protein L-homochirality. This is D-aminoacyl-tRNA deacylase from Pseudomonas savastanoi pv. phaseolicola (strain 1448A / Race 6) (Pseudomonas syringae pv. phaseolicola (strain 1448A / Race 6)).